The sequence spans 208 residues: 3-isopropylmalate dehydratase small subunit (208 aa).

The protein belongs to the LeuD family. LeuD type 1 subfamily. In terms of assembly, heterodimer of LeuC and LeuD.

It catalyses the reaction (2R,3S)-3-isopropylmalate = (2S)-2-isopropylmalate. It participates in amino-acid biosynthesis; L-leucine biosynthesis; L-leucine from 3-methyl-2-oxobutanoate: step 2/4. Its function is as follows. Catalyzes the isomerization between 2-isopropylmalate and 3-isopropylmalate, via the formation of 2-isopropylmaleate. The sequence is that of 3-isopropylmalate dehydratase small subunit (leuD) from Cupriavidus necator (Alcaligenes eutrophus).